The following is a 136-amino-acid chain: Large ribosomal subunit protein uL16c (136 aa).

Belongs to the universal ribosomal protein uL16 family. In terms of assembly, part of the 50S ribosomal subunit.

It localises to the plastid. The protein localises to the chloroplast. The chain is Large ribosomal subunit protein uL16c from Chlamydomonas reinhardtii (Chlamydomonas smithii).